The sequence spans 476 residues: Methylenetetrahydrofolate--tRNA-(uracil-5-)-methyltransferase TrmFO (476 aa).

An FAD-binding site is contributed by 14-19 (GGGLAG). The segment at 428-447 (LTEPPTHGADGKKLRGPEKS) is disordered. Residues 436–447 (ADGKKLRGPEKS) show a composition bias toward basic and acidic residues.

It belongs to the MnmG family. TrmFO subfamily. It depends on FAD as a cofactor.

The protein resides in the cytoplasm. It carries out the reaction uridine(54) in tRNA + (6R)-5,10-methylene-5,6,7,8-tetrahydrofolate + NADH + H(+) = 5-methyluridine(54) in tRNA + (6S)-5,6,7,8-tetrahydrofolate + NAD(+). The catalysed reaction is uridine(54) in tRNA + (6R)-5,10-methylene-5,6,7,8-tetrahydrofolate + NADPH + H(+) = 5-methyluridine(54) in tRNA + (6S)-5,6,7,8-tetrahydrofolate + NADP(+). Catalyzes the folate-dependent formation of 5-methyl-uridine at position 54 (M-5-U54) in all tRNAs. The polypeptide is Methylenetetrahydrofolate--tRNA-(uracil-5-)-methyltransferase TrmFO (Rhodopseudomonas palustris (strain BisA53)).